The chain runs to 340 residues: 4-amino-5-hydroxymethyl-2-methylpyrimidine phosphate synthase THI12 (340 aa).

N6-(pyridoxal phosphate)lysine is present on K62. Residue H66 is part of the active site. 115 to 118 (GEFG) is a pyridoxal 5'-phosphate binding site. The CCCFC; essential for catalytic activity, may be the site of iron coordination signature appears at 195–199 (CCCFC).

This sequence belongs to the NMT1/THI5 family. Homodimer. The cofactor is Fe cation.

It catalyses the reaction N(6)-(pyridoxal phosphate)-L-lysyl-[4-amino-5-hydroxymethyl-2-methylpyrimidine phosphate synthase] + L-histidyl-[4-amino-5-hydroxymethyl-2-methylpyrimidine phosphate synthase] + 2 Fe(3+) + 4 H2O = L-lysyl-[4-amino-5-hydroxymethyl-2-methylpyrimidine phosphate synthase] + (2S)-2-amino-5-hydroxy-4-oxopentanoyl-[4-amino-5-hydroxymethyl-2-methylpyrimidine phosphate synthase] + 4-amino-2-methyl-5-(phosphooxymethyl)pyrimidine + 3-oxopropanoate + 2 Fe(2+) + 2 H(+). Its pathway is cofactor biosynthesis; thiamine diphosphate biosynthesis. In terms of biological role, responsible for the formation of the pyrimidine heterocycle in the thiamine biosynthesis pathway. Catalyzes the formation of hydroxymethylpyrimidine phosphate (HMP-P) from histidine and pyridoxal phosphate (PLP). The protein uses PLP and the active site histidine to form HMP-P, generating an inactive enzyme. The enzyme can only undergo a single turnover, which suggests it is a suicide enzyme. This is 4-amino-5-hydroxymethyl-2-methylpyrimidine phosphate synthase THI12 from Saccharomyces cerevisiae (strain ATCC 204508 / S288c) (Baker's yeast).